The following is a 376-amino-acid chain: Putative 12-oxophytodienoate reductase 2 (376 aa).

FMN is bound by residues P31 to T33, A64, and Q106. H178–H181 serves as a coordination point for substrate. Residue Y183 is the Proton donor of the active site. FMN is bound by residues R230, G301, and G322–R323.

It belongs to the NADH:flavin oxidoreductase/NADH oxidase family. The cofactor is FMN.

In terms of biological role, putative oxophytodienoate reductase that may be involved in the biosynthesis or metabolism of oxylipin signaling molecules. The protein is Putative 12-oxophytodienoate reductase 2 (OPR2) of Oryza sativa subsp. japonica (Rice).